The chain runs to 487 residues: Neuronal immunoglobulin domain-containing protein rig-3 (487 aa).

The N-terminal stretch at 1–23 (MGRLLAKMLFPLAMCLFVSAVSA) is a signal peptide. Ig-like domains lie at 34-139 (PIVI…KTIK) and 247-354 (PEFE…PKVT). Disulfide bonds link Cys61-Cys124 and Cys271-Cys327. Asp466 carries GPI-anchor amidated aspartate lipidation. A propeptide spans 467–487 (SASDSKFPLALATLFFVCLFI) (removed in mature form).

Expressed in the cholinergic motor neurons AS, VA and DA in the ventral nerve cord and in the mechanosensory ALM neurons in the midbody.

The protein resides in the cell projection. It is found in the axon. It localises to the synapse. Its subcellular location is the cell membrane. Its function is as follows. Cell surface protein which plays a role in the plasticity of cholinergic synapses at neuromuscular junctions and in the polarity of the mechanosensory neuron ALM, possibly by antagonizing Wnt signaling. The protein is Neuronal immunoglobulin domain-containing protein rig-3 of Caenorhabditis elegans.